Reading from the N-terminus, the 184-residue chain is Protein GrpE (184 aa).

The segment covering 1–12 has biased composition (basic and acidic residues); that stretch reads MADEQLNEKDLN. A disordered region spans residues 1–22; that stretch reads MADEQLNEKDLNAEEAGAVDNG.

This sequence belongs to the GrpE family. As to quaternary structure, homodimer.

It is found in the cytoplasm. Participates actively in the response to hyperosmotic and heat shock by preventing the aggregation of stress-denatured proteins, in association with DnaK and GrpE. It is the nucleotide exchange factor for DnaK and may function as a thermosensor. Unfolded proteins bind initially to DnaJ; upon interaction with the DnaJ-bound protein, DnaK hydrolyzes its bound ATP, resulting in the formation of a stable complex. GrpE releases ADP from DnaK; ATP binding to DnaK triggers the release of the substrate protein, thus completing the reaction cycle. Several rounds of ATP-dependent interactions between DnaJ, DnaK and GrpE are required for fully efficient folding. The chain is Protein GrpE from Pseudomonas putida (strain W619).